The following is a 159-amino-acid chain: Outer envelope pore protein 16-3, chloroplastic/mitochondrial (159 aa).

Met1 is modified (N-acetylmethionine). The segment at 1-65 is contains beta strands; it reads MDPAEMRYLE…IRTLKMMGTH (65 aa). The next 3 membrane-spanning stretches (helical) occupy residues 24–40, 62–79, and 92–109; these read ITGF…LATW, MGTH…YIGV, and FYNG…VLGY.

It belongs to the Tim17/Tim22/Tim23 family. Plastid outer envelope porin OEP16 (TC 1.B.30) subfamily. Homodimer and oligomers in membrane. Part of both the NADH-ubiquinone oxidoreductase complex I and of the TIM17:23 complex. Interacts with TIM23-2.

The protein localises to the plastid. It localises to the chloroplast outer membrane. It is found in the mitochondrion outer membrane. The protein resides in the mitochondrion inner membrane. Functionally, voltage-dependent high-conductance channel with a slight cation-selectivity; selective for amino acids but excludes triosephosphates or uncharged sugars. Non-essential amino acid-selective channel protein and translocation pore for NADPH:protochlorophyllide oxidoreductase A (PORA) and possibly PORB. The protein is Outer envelope pore protein 16-3, chloroplastic/mitochondrial (OEP163) of Arabidopsis thaliana (Mouse-ear cress).